Consider the following 192-residue polypeptide: Peptidyl-tRNA hydrolase (192 aa).

Y14 is a binding site for tRNA. H19 (proton acceptor) is an active-site residue. TRNA contacts are provided by Y64, N66, and N112.

Belongs to the PTH family. Monomer.

It localises to the cytoplasm. The enzyme catalyses an N-acyl-L-alpha-aminoacyl-tRNA + H2O = an N-acyl-L-amino acid + a tRNA + H(+). Functionally, hydrolyzes ribosome-free peptidyl-tRNAs (with 1 or more amino acids incorporated), which drop off the ribosome during protein synthesis, or as a result of ribosome stalling. Catalyzes the release of premature peptidyl moieties from peptidyl-tRNA molecules trapped in stalled 50S ribosomal subunits, and thus maintains levels of free tRNAs and 50S ribosomes. This Anaeromyxobacter dehalogenans (strain 2CP-C) protein is Peptidyl-tRNA hydrolase.